Here is a 456-residue protein sequence, read N- to C-terminus: Argininosuccinate lyase (456 aa).

Belongs to the lyase 1 family. Argininosuccinate lyase subfamily.

The protein localises to the cytoplasm. It carries out the reaction 2-(N(omega)-L-arginino)succinate = fumarate + L-arginine. The protein operates within amino-acid biosynthesis; L-arginine biosynthesis; L-arginine from L-ornithine and carbamoyl phosphate: step 3/3. This Listeria monocytogenes serotype 4a (strain HCC23) protein is Argininosuccinate lyase.